Reading from the N-terminus, the 967-residue chain is Vacuolar membrane protease (967 aa).

Over 1–16 the chain is Cytoplasmic; that stretch reads MARPSLSRSNPLGFTP. The chain crosses the membrane as a helical span at residues 17-37; that stretch reads WPVTVITAVVYLALVVPLLVV. The Vacuolar segment spans residues 38 to 387; that stretch reads HHVVPSAPSS…SAFVVFELHT (350 aa). N-linked (GlcNAc...) asparagine glycans are attached at residues Asn53 and Asn119. 2 residues coordinate Zn(2+): His171 and Asp183. Catalysis depends on Glu217, which acts as the Proton acceptor. The Zn(2+) site is built by Glu218, Glu243, and His316. The chain crosses the membrane as a helical span at residues 388–408; the sequence is LFALSVTLLVVAPLVLLVTSI. The Cytoplasmic segment spans residues 409 to 441; sequence ALNRADKMYLFRASASPEDSDGSEAVLLHGVRG. Residues 442–462 form a helical membrane-spanning segment; the sequence is FFRFPFLLVIPTAVTVGLAYL. Residues 463–472 are Vacuolar-facing; sequence VTKFNPYIIH. Residues 473 to 493 form a helical membrane-spanning segment; sequence SSEYAVWSMMISAWVFLAWFV. Residues 494–507 lie on the Cytoplasmic side of the membrane; the sequence is SRVADFARPSAFHR. Residues 508 to 528 traverse the membrane as a helical segment; sequence VYTLTWLFLVEWVLLVISTVY. The Vacuolar portion of the chain corresponds to 529–532; sequence ENKY. Residues 533 to 553 traverse the membrane as a helical segment; it reads GLAGGYFVFFAFAGTFLATWI. Over 554-663 the chain is Cytoplasmic; the sequence is SYLELFALPR…WSIHLPKWVW (110 aa). The interval 579 to 612 is disordered; sequence SSHGSRLGTASGEDVEDGEDEDEDDDGTTAEATE. Acidic residues predominate over residues 591–606; it reads EDVEDGEDEDEDDDGT. A helical membrane pass occupies residues 664–684; it reads VLQFLLTAPLVLTFVGPLALL. Topologically, residues 685–700 are vacuolar; sequence LTSALRQTGQDGSSSL. The chain crosses the membrane as a helical span at residues 701-721; the sequence is FIYIAVAALTTLLFIPLLPFI. Over 722-727 the chain is Cytoplasmic; the sequence is HRYTHH. Residues 728–748 form a helical membrane-spanning segment; the sequence is IPLFLLCVFAGTLIYNLVAFP. Topologically, residues 749–967 are vacuolar; that stretch reads FSPANRLKLF…LVEGSRRFEI (219 aa). N-linked (GlcNAc...) asparagine glycans are attached at residues Asn795 and Asn832.

This sequence belongs to the peptidase M28 family. Requires Zn(2+) as cofactor.

Its subcellular location is the vacuole membrane. In terms of biological role, may be involved in vacuolar sorting and osmoregulation. The chain is Vacuolar membrane protease from Neosartorya fischeri (strain ATCC 1020 / DSM 3700 / CBS 544.65 / FGSC A1164 / JCM 1740 / NRRL 181 / WB 181) (Aspergillus fischerianus).